We begin with the raw amino-acid sequence, 450 residues long: Sulfide:quinone oxidoreductase, mitochondrial (450 aa).

FAD-binding positions include 53-54, Glu75, Gln83, and Val118; that span reads AG. N6-acetyllysine occurs at positions 134 and 173. Catalysis depends on Cys201, which acts as the Cysteine persulfide intermediate. A disulfide bridge connects residues Cys201 and Cys379. Asp336 contacts FAD. Ser343 bears the Phosphoserine mark. An FAD-binding site is contributed by 344–347; sequence KTAA. The active-site Cysteine persulfide intermediate is Cys379.

It belongs to the SQRD family. The cofactor is FAD.

It is found in the mitochondrion. It catalyses the reaction ubiquinone-10 + hydrogen sulfide + sulfite + 2 H(+) = ubiquinol-10 + thiosulfate. The enzyme catalyses a quinone + hydrogen sulfide + glutathione + H(+) = S-sulfanylglutathione + a quinol. It carries out the reaction ubiquinone-10 + hydrogen sulfide + glutathione + H(+) = S-sulfanylglutathione + ubiquinol-10. Functionally, catalyzes the oxidation of hydrogen sulfide with the help of a quinone, such as ubiquinone-10, giving rise to thiosulfate and ultimately to sulfane (molecular sulfur) atoms. Requires an additional electron acceptor; can use sulfite, sulfide or cyanide (in vitro). It is believed the in vivo electron acceptor is glutathione. This Mus musculus (Mouse) protein is Sulfide:quinone oxidoreductase, mitochondrial.